The following is a 647-amino-acid chain: Exoribonuclease 2 (647 aa).

Residues 192 to 519 (RIDLTSLDFV…NHRLLKAIIQ (328 aa)) enclose the RNB domain. Residues 564 to 646 (EQRFTAEIID…ETRNIVARPT (83 aa)) form the S1 motif domain.

This sequence belongs to the RNR ribonuclease family. RNase II subfamily.

It localises to the cytoplasm. The catalysed reaction is Exonucleolytic cleavage in the 3'- to 5'-direction to yield nucleoside 5'-phosphates.. In terms of biological role, involved in mRNA degradation. Hydrolyzes single-stranded polyribonucleotides processively in the 3' to 5' direction. This Photorhabdus laumondii subsp. laumondii (strain DSM 15139 / CIP 105565 / TT01) (Photorhabdus luminescens subsp. laumondii) protein is Exoribonuclease 2.